The sequence spans 246 residues: MSRGSSAGFDRHITIFSPEGRVYQVEYAFKAINSTNLTAVAVKGADAAVIAVQKRVPDSLIVADTVTSVYQISQSVGCCAIGMIPDAKFQIKRAQGEAASWKYKNGYDMPCELLAKKMADLNQYYTQNAEMRSLGCALLFISYDDEKGPEVYRVDPAGYYRGMKGVSVGVKQLPATSFLEKKIKKKSELTSTEAIELAIEALQTSLGIDVRSKDLEVVVVTKDNSKFTKLTSDQVEHHLNQIANRD.

It belongs to the peptidase T1A family. As to quaternary structure, the 26S proteasome consists of a 20S proteasome core and two 19S regulatory subunits. The 20S proteasome core is composed of 28 subunits that are arranged in four stacked rings, resulting in a barrel-shaped structure. The two end rings are each formed by seven alpha subunits, and the two central rings are each formed by seven beta subunits. The catalytic chamber with the active sites is on the inside of the barrel.

It is found in the cytoplasm. Its subcellular location is the nucleus. Functionally, the proteasome is a multicatalytic proteinase complex which is characterized by its ability to cleave peptides with Arg, Phe, Tyr, Leu, and Glu adjacent to the leaving group at neutral or slightly basic pH. The proteasome has an ATP-dependent proteolytic activity. In Caenorhabditis elegans, this protein is Proteasome subunit alpha type-6 (pas-1).